We begin with the raw amino-acid sequence, 107 residues long: Integration host factor subunit beta (107 aa).

The segment at Arg-87–Gly-107 is disordered.

The protein belongs to the bacterial histone-like protein family. Heterodimer of an alpha and a beta chain.

Functionally, this protein is one of the two subunits of integration host factor, a specific DNA-binding protein that functions in genetic recombination as well as in transcriptional and translational control. The sequence is that of Integration host factor subunit beta from Granulibacter bethesdensis (strain ATCC BAA-1260 / CGDNIH1).